Here is a 337-residue protein sequence, read N- to C-terminus: 6-phosphogluconolactonase (337 aa).

It belongs to the cycloisomerase 2 family.

The catalysed reaction is 6-phospho-D-glucono-1,5-lactone + H2O = 6-phospho-D-gluconate + H(+). The protein operates within carbohydrate degradation; pentose phosphate pathway; D-ribulose 5-phosphate from D-glucose 6-phosphate (oxidative stage): step 2/3. Its function is as follows. Catalyzes the hydrolysis of 6-phosphogluconolactone to 6-phosphogluconate. The polypeptide is 6-phosphogluconolactonase (Blochmanniella pennsylvanica (strain BPEN)).